We begin with the raw amino-acid sequence, 570 residues long: Phosphoenolpyruvate-protein phosphotransferase (570 aa).

Catalysis depends on H189, which acts as the Tele-phosphohistidine intermediate. The phosphoenolpyruvate site is built by R296 and R332. Residues E431 and D455 each contribute to the Mg(2+) site. Residues 454-455 (ND) and R465 contribute to the phosphoenolpyruvate site. C502 acts as the Proton donor in catalysis.

It belongs to the PEP-utilizing enzyme family. Homodimer. Interacts with FloT. It depends on Mg(2+) as a cofactor.

The protein resides in the cytoplasm. It is found in the membrane raft. It carries out the reaction L-histidyl-[protein] + phosphoenolpyruvate = N(pros)-phospho-L-histidyl-[protein] + pyruvate. In terms of biological role, general (non sugar-specific) component of the phosphoenolpyruvate-dependent sugar phosphotransferase system (sugar PTS). This major carbohydrate active-transport system catalyzes the phosphorylation of incoming sugar substrates concomitantly with their translocation across the cell membrane. Enzyme I transfers the phosphoryl group from phosphoenolpyruvate (PEP) to the phosphoryl carrier protein (HPr). The sequence is that of Phosphoenolpyruvate-protein phosphotransferase (ptsI) from Bacillus subtilis (strain 168).